The following is a 143-amino-acid chain: Nucleoside diphosphate kinase (143 aa).

Residues lysine 11, phenylalanine 59, arginine 87, threonine 93, arginine 104, and asparagine 114 each coordinate ATP. Catalysis depends on histidine 117, which acts as the Pros-phosphohistidine intermediate.

The protein belongs to the NDK family. As to quaternary structure, homotetramer. Requires Mg(2+) as cofactor.

The protein resides in the cytoplasm. The enzyme catalyses a 2'-deoxyribonucleoside 5'-diphosphate + ATP = a 2'-deoxyribonucleoside 5'-triphosphate + ADP. It carries out the reaction a ribonucleoside 5'-diphosphate + ATP = a ribonucleoside 5'-triphosphate + ADP. Major role in the synthesis of nucleoside triphosphates other than ATP. The ATP gamma phosphate is transferred to the NDP beta phosphate via a ping-pong mechanism, using a phosphorylated active-site intermediate. This Pseudomonas aeruginosa (strain UCBPP-PA14) protein is Nucleoside diphosphate kinase.